We begin with the raw amino-acid sequence, 124 residues long: Small ribosomal subunit protein bS6 (124 aa).

Residues 96–124 (ETAPSPMMKEVQREEARKAAQTTTEGQAA) form a disordered region. Residues 115-124 (AQTTTEGQAA) are compositionally biased toward polar residues.

This sequence belongs to the bacterial ribosomal protein bS6 family.

Binds together with bS18 to 16S ribosomal RNA. This Cupriavidus pinatubonensis (strain JMP 134 / LMG 1197) (Cupriavidus necator (strain JMP 134)) protein is Small ribosomal subunit protein bS6.